Here is a 448-residue protein sequence, read N- to C-terminus: Glutamyl-tRNA reductase (448 aa).

Substrate contacts are provided by residues 49 to 52 (TCNR), serine 109, 114 to 116 (ETQ), and glutamine 120. Cysteine 50 acts as the Nucleophile in catalysis. 189–194 (GAGETG) provides a ligand contact to NADP(+). A disordered region spans residues 427 to 448 (PVDEVEETDATSAKAPLRALMR).

It belongs to the glutamyl-tRNA reductase family. In terms of assembly, homodimer.

The catalysed reaction is (S)-4-amino-5-oxopentanoate + tRNA(Glu) + NADP(+) = L-glutamyl-tRNA(Glu) + NADPH + H(+). Its pathway is porphyrin-containing compound metabolism; protoporphyrin-IX biosynthesis; 5-aminolevulinate from L-glutamyl-tRNA(Glu): step 1/2. In terms of biological role, catalyzes the NADPH-dependent reduction of glutamyl-tRNA(Glu) to glutamate 1-semialdehyde (GSA). This Exiguobacterium sp. (strain ATCC BAA-1283 / AT1b) protein is Glutamyl-tRNA reductase.